A 157-amino-acid polypeptide reads, in one-letter code: Protein-export protein SecB (157 aa).

The protein belongs to the SecB family. In terms of assembly, homotetramer, a dimer of dimers. One homotetramer interacts with 1 SecA dimer.

It localises to the cytoplasm. One of the proteins required for the normal export of preproteins out of the cell cytoplasm. It is a molecular chaperone that binds to a subset of precursor proteins, maintaining them in a translocation-competent state. It also specifically binds to its receptor SecA. The chain is Protein-export protein SecB from Shewanella frigidimarina (strain NCIMB 400).